Reading from the N-terminus, the 461-residue chain is MAENHKLWGGRFEASLEKWVEEFGASISFDQKMAEFDLKGSIAHVTMLGETGIIAQEEALQIKQGLEELLEEYKAGKLEFDVSNEDIHMNIESLLTAKIGPVAGKLHTARSRNDQVATDMHLYLKAKLVEVIEKIDNLRNTLVSLADKHTYTIMPGYTHLQHAQPISFGHHLMAYYNMFTRDSERFEFNIKHTDISPLGAAALAGTTFPIDRNMTSDLMGFAKPYSNSLDAVSDRDFILEFLSNSSILMMHMTRICEEIINWCSNEFKFVTLSDTFSTGSSIMPQKKNPDMAELIRGKSGRVYGNLIGLLTVMKSLPLAYNKDLQEDKEGMFDTVETITVAIDILAGMLNTMTVNDKHMAESTEKDFSNATELADYLATKGLPFREAHEIVGKLVLECTKAGYYLQDVPLERYQEVSDLIEEDIYETLKSHTAVERRHSLGGTGFDQVKWQIKEAQQSLNK.

This sequence belongs to the lyase 1 family. Argininosuccinate lyase subfamily.

It localises to the cytoplasm. It carries out the reaction 2-(N(omega)-L-arginino)succinate = fumarate + L-arginine. Its pathway is amino-acid biosynthesis; L-arginine biosynthesis; L-arginine from L-ornithine and carbamoyl phosphate: step 3/3. The protein is Argininosuccinate lyase of Streptococcus thermophilus (strain CNRZ 1066).